The primary structure comprises 232 residues: uncharacterized protein (232 aa).

The Autotransporter domain occupies 1–232 (MIIKKSGGRW…LYTMGVSARF (232 aa)).

This is an uncharacterized protein from Escherichia coli (strain K12).